The sequence spans 537 residues: MLACLAILAVVGLGMTRVSALSKDDTAQLKITNIEGGPTVTLYKIGEGVYNTNGDSFINFKYAEGVSLTETGPTSQEITTIANGINTGKIKPFSTENVSISNGTATYNARGASVYIALLTGATDGRTYNPILLAASYNGEGNLVTKNIDSKSNYLYGQTSVAKSSLPSITKKVTGTIDDVNKKTTSLGSVLSYSLTFELPSYTKEAVNKTVYVSDNMSEGLTFNFNSLTVEWKGKMANITEDGSVMVENTKIGIAKEVNNGFNLSFIYDSLESISPNISYKAVVNNKAIVGEEGNPNKAEFFYSNNPTKGNTYDNLDKKPDKGNGITSKEDSKIVYTYQIAFRKVDSVSKTPLIGAIFGVYDTSNKLIDIVTTNKNGYAISTQVSSGKYKIKELKAPKGYSLNTETYEITANWVTATVKTSANSKSTTYTSDKNKATDNSEQVGWLKNGIFYSIDSRPTGNDVKEAYIESTKALTDGTTFSKSNEGSGTVLLETDIPNTKLGELPSTGSIGTYLFKAIGSAAMIGAIGIYIVKRRKA.

An N-terminal signal peptide occupies residues 1-22 (MLACLAILAVVGLGMTRVSALS). The hydrophilic stretch occupies residues 310–330 (GNTYDNLDKKPDKGNGITSKE). An LPXTG sorting signal motif is present at residues 504–508 (LPSTG). Threonine 507 carries the post-translational modification Pentaglycyl murein peptidoglycan amidated threonine. A propeptide spans 508 to 537 (GSIGTYLFKAIGSAAMIGAIGIYIVKRRKA) (removed by sortase).

The protein resides in the secreted. It is found in the cell wall. The sequence is that of Trypsin-resistant surface T6 protein (tee6) from Streptococcus pyogenes serotype M6 (strain ATCC BAA-946 / MGAS10394).